The following is a 1976-amino-acid chain: Myosin-10 (1976 aa).

R18 carries the omega-N-methylarginine modification. The Myosin N-terminal SH3-like domain maps to 31–81; it reads TAKKLVWIPSERHGFEAASIKEERGDEVLVELAENGKKAMVNKDDIQKMNP. Residues 85–783 form the Myosin motor domain; the sequence is SKVEDMAELT…VLAHLEEERD (699 aa). An ATP-binding site is contributed by 178-185; that stretch reads GESGAGKT. K442 carries the post-translational modification N6-acetyllysine. The actin-binding stretch occupies residues 661–683; the sequence is LTKLMATLRNTNPNFVRCIIPNH. An IQ domain is found at 786–815; it reads ITDIIIFFQAVCRGYLARKAFAKKQQQLSA. A coiled-coil region spans residues 845-1976; sequence LQVTRQEEEL…INETQPPQSE (1132 aa). The segment at 1126 to 1149 is disordered; the sequence is DFESEKASRNKAEKQKRDLSEELE. Over residues 1129–1149 the composition is skewed to basic and acidic residues; the sequence is SEKASRNKAEKQKRDLSEELE. A Phosphoserine modification is found at S1145. An N6-acetyllysine mark is found at K1241, K1301, and K1645. Disordered regions lie at residues 1697–1718 and 1874–1976; these read ASSERARRHAEQERDELADEIA and KANA…PQSE. The span at 1698-1708 shows a compositional bias: basic and acidic residues; the sequence is SSERARRHAEQ. R1930 is subject to Omega-N-methylarginine. 4 positions are modified to phosphoserine: S1935, S1937, S1938, and S1939. Omega-N-methylarginine is present on R1940. A phosphoserine mark is found at S1952 and S1956. At T1960 the chain carries Phosphothreonine. Polar residues predominate over residues 1967–1976; that stretch reads INETQPPQSE. The residue at position 1975 (S1975) is a Phosphoserine.

The protein belongs to the TRAFAC class myosin-kinesin ATPase superfamily. Myosin family. In terms of assembly, myosin is a hexameric protein that consists of 2 heavy chain subunits (MHC), 2 alkali light chain subunits (MLC) and 2 regulatory light chain subunits (MLC-2). Interacts with PLEKHG6. Interacts with ECPAS. Interacts with KIF26B. Interacts with LARP6. Interacts with MCC. Interacts with CFAP95. Phosphorylated by ABL2.

The protein localises to the cell projection. It is found in the lamellipodium. In terms of biological role, cellular myosin that appears to play a role in cytokinesis, cell shape, and specialized functions such as secretion and capping. Involved with LARP6 in the stabilization of type I collagen mRNAs for CO1A1 and CO1A2. During cell spreading, plays an important role in cytoskeleton reorganization, focal contacts formation (in the central part but not the margins of spreading cells), and lamellipodial extension; this function is mechanically antagonized by MYH9. The sequence is that of Myosin-10 (MYH10) from Bos taurus (Bovine).